The primary structure comprises 477 residues: UDP-N-acetylmuramoylalanine--D-glutamate ligase (477 aa).

125-131 is an ATP binding site; the sequence is GTNGKST.

This sequence belongs to the MurCDEF family.

It is found in the cytoplasm. It catalyses the reaction UDP-N-acetyl-alpha-D-muramoyl-L-alanine + D-glutamate + ATP = UDP-N-acetyl-alpha-D-muramoyl-L-alanyl-D-glutamate + ADP + phosphate + H(+). Its pathway is cell wall biogenesis; peptidoglycan biosynthesis. Cell wall formation. Catalyzes the addition of glutamate to the nucleotide precursor UDP-N-acetylmuramoyl-L-alanine (UMA). This is UDP-N-acetylmuramoylalanine--D-glutamate ligase from Rhodospirillum rubrum (strain ATCC 11170 / ATH 1.1.1 / DSM 467 / LMG 4362 / NCIMB 8255 / S1).